The chain runs to 232 residues: Phosphatidylserine decarboxylase proenzyme (232 aa).

The active-site Schiff-base intermediate with substrate; via pyruvic acid is Ser201. Ser201 carries the post-translational modification Pyruvic acid (Ser); by autocatalysis.

The protein belongs to the phosphatidylserine decarboxylase family. PSD-A subfamily. Heterodimer of a large membrane-associated beta subunit and a small pyruvoyl-containing alpha subunit. It depends on pyruvate as a cofactor. In terms of processing, is synthesized initially as an inactive proenzyme. Formation of the active enzyme involves a self-maturation process in which the active site pyruvoyl group is generated from an internal serine residue via an autocatalytic post-translational modification. Two non-identical subunits are generated from the proenzyme in this reaction, and the pyruvate is formed at the N-terminus of the alpha chain, which is derived from the carboxyl end of the proenzyme. The post-translation cleavage follows an unusual pathway, termed non-hydrolytic serinolysis, in which the side chain hydroxyl group of the serine supplies its oxygen atom to form the C-terminus of the beta chain, while the remainder of the serine residue undergoes an oxidative deamination to produce ammonia and the pyruvoyl prosthetic group on the alpha chain.

Its subcellular location is the cell membrane. It carries out the reaction a 1,2-diacyl-sn-glycero-3-phospho-L-serine + H(+) = a 1,2-diacyl-sn-glycero-3-phosphoethanolamine + CO2. It participates in phospholipid metabolism; phosphatidylethanolamine biosynthesis; phosphatidylethanolamine from CDP-diacylglycerol: step 2/2. Functionally, catalyzes the formation of phosphatidylethanolamine (PtdEtn) from phosphatidylserine (PtdSer). The polypeptide is Phosphatidylserine decarboxylase proenzyme (Mycolicibacterium smegmatis (strain ATCC 700084 / mc(2)155) (Mycobacterium smegmatis)).